We begin with the raw amino-acid sequence, 1584 residues long: Pentafunctional AROM polypeptide (1584 aa).

Residues 1–384 form a 3-dehydroquinate synthase region; the sequence is MSQDTDVVSV…YEKHATVVSD (384 aa). NAD(+) contacts are provided by residues 46 to 48, 83 to 86, 114 to 116, and Asp-119; these read DTN, ETSK, and GGV. Arg-130 contributes to the 7-phospho-2-dehydro-3-deoxy-D-arabino-heptonate binding site. 139–140 is a binding site for NAD(+); sequence TT. 7-phospho-2-dehydro-3-deoxy-D-arabino-heptonate-binding residues include Asp-146 and Lys-152. Lys-161 contributes to the NAD(+) binding site. Asn-162 serves as a coordination point for 7-phospho-2-dehydro-3-deoxy-D-arabino-heptonate. NAD(+)-binding positions include 179 to 182 and Asn-190; that span reads FLET. Glu-194 provides a ligand contact to Zn(2+). Residues 194 to 197 and Lys-250 each bind 7-phospho-2-dehydro-3-deoxy-D-arabino-heptonate; that span reads EVIK. The active-site Proton acceptor; for 3-dehydroquinate synthase activity is the Glu-260. 7-phospho-2-dehydro-3-deoxy-D-arabino-heptonate contacts are provided by residues 264–268 and His-271; that span reads RNLLN. Residue His-271 participates in Zn(2+) binding. Catalysis depends on His-275, which acts as the Proton acceptor; for 3-dehydroquinate synthase activity. 7-phospho-2-dehydro-3-deoxy-D-arabino-heptonate contacts are provided by His-287 and Lys-356. His-287 is a binding site for Zn(2+). Residues 397 to 843 are EPSP synthase; that stretch reads VSPFDNSVSD…WDVLRNSFKI (447 aa). The active-site For EPSP synthase activity is Cys-825. Residues 863–1058 are shikimate kinase; it reads RASVILIGMR…IQKPHSFFLS (196 aa). Residue 870–877 participates in ATP binding; the sequence is GMRGAGKT. Positions 1059-1280 are 3-dehydroquinase; sequence LTFPNINDAI…AAPGQLSVRQ (222 aa). His-1182 acts as the Proton acceptor; for 3-dehydroquinate dehydratase activity in catalysis. Lys-1211 (schiff-base intermediate with substrate; for 3-dehydroquinate dehydratase activity) is an active-site residue. A shikimate dehydrogenase region spans residues 1293 to 1584; that stretch reads PKKFYLFGTP…YMVLCAKEHN (292 aa).

In the N-terminal section; belongs to the sugar phosphate cyclases superfamily. Dehydroquinate synthase family. This sequence in the 2nd section; belongs to the EPSP synthase family. It in the 3rd section; belongs to the shikimate kinase family. The protein in the 4th section; belongs to the type-I 3-dehydroquinase family. In the C-terminal section; belongs to the shikimate dehydrogenase family. Homodimer. It depends on Zn(2+) as a cofactor.

Its subcellular location is the cytoplasm. The catalysed reaction is 7-phospho-2-dehydro-3-deoxy-D-arabino-heptonate = 3-dehydroquinate + phosphate. It carries out the reaction 3-dehydroquinate = 3-dehydroshikimate + H2O. The enzyme catalyses shikimate + NADP(+) = 3-dehydroshikimate + NADPH + H(+). It catalyses the reaction shikimate + ATP = 3-phosphoshikimate + ADP + H(+). The catalysed reaction is 3-phosphoshikimate + phosphoenolpyruvate = 5-O-(1-carboxyvinyl)-3-phosphoshikimate + phosphate. It participates in metabolic intermediate biosynthesis; chorismate biosynthesis; chorismate from D-erythrose 4-phosphate and phosphoenolpyruvate: step 2/7. It functions in the pathway metabolic intermediate biosynthesis; chorismate biosynthesis; chorismate from D-erythrose 4-phosphate and phosphoenolpyruvate: step 3/7. Its pathway is metabolic intermediate biosynthesis; chorismate biosynthesis; chorismate from D-erythrose 4-phosphate and phosphoenolpyruvate: step 4/7. The protein operates within metabolic intermediate biosynthesis; chorismate biosynthesis; chorismate from D-erythrose 4-phosphate and phosphoenolpyruvate: step 5/7. It participates in metabolic intermediate biosynthesis; chorismate biosynthesis; chorismate from D-erythrose 4-phosphate and phosphoenolpyruvate: step 6/7. In terms of biological role, the AROM polypeptide catalyzes 5 consecutive enzymatic reactions in prechorismate polyaromatic amino acid biosynthesis. The chain is Pentafunctional AROM polypeptide from Schizosaccharomyces japonicus (strain yFS275 / FY16936) (Fission yeast).